Consider the following 1374-residue polypeptide: MVQQLQKSMSDGMATTAAAVPMNANGVDTGKVPTAPPDVFFSTENEPEDCTPVKMDPFDRPKSDKDPVEDAIERLLKVMEKIDCPYTPGKEKGVDQDESDDMTESEDHDEMAKDDEGIPANEVRVETRKMDCTTGQLVAPRIYEKVDTLSSTSESSAEEDESMMIIKEGIRVCYGVWKKRQKNSEMALKGLAIVLELCLTQPSARDEIFSVLLETLGFNTVTYWKAVVPQVVDSDLTYATQYREALLFSMCLYDVNHSKNRLRELYAAIPGFRQSMLGIRAKQFTERYRHLQMKIARSRQSSRMSSKYGSEDNIQAMVTLANDVIMDEETAPTQMPLVDMSHDKQRVINVSNAPPVSISRKTSGSWEIKQGSGGLVACVDPVMSADKKNIWLSNLGVNMQEELKEHSTTTNSIGLPLIKQACAGEVFCVLERNEKKELTPKQQAVESDMSLLSVLNTYNKHSYQLNPVVVNQDDYDTYYGGISNGLLWPALHNLPQFISPCYNDPEALREQWCAYVRVNYLFSINAARNSRAQDFIWIHDYHLMLCGQIMRSLEGSLDVSSIEEREGKQKESLQIGFFLHIPFQPPANFMTKYRTVGEPIVRALLRFTKVGFQTSRDRETFVKLVADHIKRTKIDYDSRLDRYTIEHDGFACSLGVFPVSIKIADFVNIAKNPQTVIEAEEIRKQIMGKCADGGQLFFSVERFDYTKGIAEKLRAWQRYFEKYPDRIGKDVLFQVAVTNRRSVESYRQYQDDVMALAELINQKFHSEQYPEWKPVIFETDGLPRSRLIAHYLAMDIGVVTPSKDGMNLVAKEMLVCNPTASLVLSTGAGTEVQLSNAQFYSEQEGKCYHRVEDIANTEAFADNFFAAATESKETRNKHGEKINQFLCVHDIDEWSDQFLDPKWTHEVISECEVKQLGQFYGLMNRTAQVRRQIVECVLKGLPIRPHFKFSLENAKVTRQANDSECTTLTSLETSCPEGTSKLTLEADEESGEEKGFKITYDIHDELSEMEKDLAFLSFIQSDEYENAEEFIKTIGSFYEGGPILFSEEVKQAAEMLQRGIHYNTFFTDRDGTLKSYACSYPTSVQPAYSAVIQAQFARRCATFCAIVTTAPLIHTGILEVATIPEGYYAYGASAGREWYLNPAQQFKDRSFSAVDLTLMNKVFELIEELLEKPEFRTFKWIGSGIQKHCGHITIAKQDVNGTIPARKVTRLHEQLVKIVNDFDPTGTTLTMRESDLDFKIYVKAKLKGRIFNKGHGIRLVKERLKPNMSKGSCLVCGDSESDIPMLEECLKLAGSKVYTIWVTRDQALQEKVSQLCERYSCTNIHYVTCPQVLLGAMAYATAHTLTNEKNRKADSYYDDSDTPMDQEDTPSKQQ.

Disordered stretches follow at residues 28 to 66 (DTGK…SDKD), 86 to 117 (YTPG…DDEG), and 1352 to 1374 (KADS…SKQQ). Basic and acidic residues-rich tracts occupy residues 56–66 (DPFDRPKSDKD) and 86–95 (YTPGKEKGVD). Acidic residues-rich tracts occupy residues 96-109 (QDES…EDHD) and 1356-1368 (YYDD…DQED).

In the N-terminal section; belongs to the glycosyltransferase 20 family. This sequence in the C-terminal section; belongs to the gob-1 trehalose phosphatase family.

It carries out the reaction D-glucose 6-phosphate + UDP-alpha-D-glucose = alpha,alpha-trehalose 6-phosphate + UDP + H(+). Catalyzes the production of trehalose from glucose-6-phosphate and UDP-alpha-D-glucose in a 2 step process. The chain is Alpha,alpha-trehalose-phosphate synthase [UDP-forming] 1 (tps-1) from Caenorhabditis briggsae.